Reading from the N-terminus, the 81-residue chain is Photosystem I iron-sulfur center (81 aa).

2 4Fe-4S ferredoxin-type domains span residues 2–31 (AHSVKIYDTCIGCTQCVRACPTDVLEMVPW) and 39–68 (IASAPRTEDCVGCKRCESACPTDYLSVRVY). Residues cysteine 11, cysteine 14, cysteine 17, cysteine 21, cysteine 48, cysteine 51, cysteine 54, and cysteine 58 each contribute to the [4Fe-4S] cluster site.

As to quaternary structure, the eukaryotic PSI reaction center is composed of at least 11 subunits. It depends on [4Fe-4S] cluster as a cofactor.

It is found in the plastid. It localises to the chloroplast thylakoid membrane. The enzyme catalyses reduced [plastocyanin] + hnu + oxidized [2Fe-2S]-[ferredoxin] = oxidized [plastocyanin] + reduced [2Fe-2S]-[ferredoxin]. Its function is as follows. Apoprotein for the two 4Fe-4S centers FA and FB of photosystem I (PSI); essential for photochemical activity. FB is the terminal electron acceptor of PSI, donating electrons to ferredoxin. The C-terminus interacts with PsaA/B/D and helps assemble the protein into the PSI complex. Required for binding of PsaD and PsaE to PSI. PSI is a plastocyanin-ferredoxin oxidoreductase, converting photonic excitation into a charge separation, which transfers an electron from the donor P700 chlorophyll pair to the spectroscopically characterized acceptors A0, A1, FX, FA and FB in turn. The polypeptide is Photosystem I iron-sulfur center (Gnetum gnemon (Spanish joint-fir)).